A 240-amino-acid polypeptide reads, in one-letter code: MADEERLKEFKEANKIVFDPNTRQVWENQNRDGTKPATTFQSEEDIKRAAPESEKDTSATSGIVPTLQNIVATVTLGCRLDLKTVALHARNAEYNPKRFAAVIMRIREPKTTALIFASGKMVVTGAKSEDDSKLASRKYARIIQKIGFAAKFTDFKIQNIVGSCDVKFPIRLEGLAFSHGTFSSYEPELFPGLIYRMVKPKIVLLIFVSGKIVLTGAKQREEIYQAFEAIYPVLSEFRKM.

The interval 21 to 61 (NTRQVWENQNRDGTKPATTFQSEEDIKRAAPESEKDTSATS) is disordered. A compositionally biased stretch (basic and acidic residues) spans 44-57 (EDIKRAAPESEKDT). Tandem repeats lie at residues 67–143 (LQNI…ARII) and 157–234 (IQNI…YPVL).

This sequence belongs to the TBP family. In terms of assembly, binds DNA as monomer. The 1.2 MDa TFIID complex is composed of TATA binding protein (TBP) and the 14 TBP-associated factors. One copy of each TAF1, TAF2, TAF3, TAF7, TAF8, TAF11, TAF13, two copies of each TAF4, TAF5, TAF6, TAF9, TAF10, TAF12, and three copies of TAF14. Interacts with TFC8.

It localises to the nucleus. In terms of biological role, general transcription factor that functions at the core of the DNA-binding general transcription factor complex TFIID. Binding of TFIID to a promoter (with or without TATA element) is the initial step in preinitiation complex (PIC) formation. TFIID plays a key role in the regulation of gene expression by RNA polymerase II through different activities such as transcription activator interaction, core promoter recognition and selectivity, TFIIA and TFIIB interaction, chromatin modification (histone acetylation by TAF1), facilitation of DNA opening and initiation of transcription. The sequence is that of TATA-box-binding protein (SPT15) from Saccharomyces cerevisiae (strain ATCC 204508 / S288c) (Baker's yeast).